Consider the following 536-residue polypeptide: G-protein coupled receptor Mth2 (536 aa).

Cystine bridges form between Cys-17–Cys-71, Cys-73–Cys-78, Cys-82–Cys-177, Cys-83–Cys-96, and Cys-138–Cys-197. Asn-24 and Asn-33 each carry an N-linked (GlcNAc...) asparagine glycan. Asn-103, Asn-113, Asn-118, Asn-159, and Asn-184 each carry an N-linked (GlcNAc...) asparagine glycan. Residues 212–232 (YAMMFSIPFMMLTIAVYLLIP) form a helical membrane-spanning segment. The Cytoplasmic portion of the chain corresponds to 233 to 241 (ELRNQHGKS). Residues 242-262 (LVCYLIGLTVGYSSLCYVQLY) traverse the membrane as a helical segment. The Extracellular portion of the chain corresponds to 263 to 273 (QVDATGVTCKV). The chain crosses the membrane as a helical span at residues 274 to 294 (FGYTAYFFFMGAYMWLSVISF). Topologically, residues 295-314 (DLWHNFRGTRGINRFQEKKR) are cytoplasmic. A helical membrane pass occupies residues 315–335 (FLFYSLYSWGIALVFLAFTYC). The Extracellular portion of the chain corresponds to 336 to 365 (AQQLSNLPDNLKPGIGDGVYCWLDMSNWAA). A helical transmembrane segment spans residues 366-386 (MIYFYGPILAIVVANTIMFIM). Residues 387–417 (TAIKIHGVQREMARIIASENSTKNLRTEKDK) are Cytoplasmic-facing. Residues 418 to 438 (FGLFLRLFLIMGITWLTELIS) traverse the membrane as a helical segment. The Extracellular portion of the chain corresponds to 439–449 (YFVGSDKGWSK). The helical transmembrane segment at 450 to 470 (LFYISDLANAMQGFLIFMLFV) threads the bilayer. The Cytoplasmic segment spans residues 471–536 (MKKKVKHLIT…VDPQKTTIFR (66 aa)). The segment at 487–506 (RDGSNQRQSQYSTKTTSSSV) is disordered. The span at 492 to 505 (QRQSQYSTKTTSSS) shows a compositional bias: low complexity.

Belongs to the G-protein coupled receptor 2 family. Mth subfamily. In terms of assembly, homodimer.

It is found in the cell membrane. Functionally, involved in biological aging and stress response. Essential for adult survival. The polypeptide is G-protein coupled receptor Mth2 (mth2) (Drosophila simulans (Fruit fly)).